The following is a 68-amino-acid chain: Copper transport protein ATOX1 (68 aa).

Positions 1–63 (MPKHEFSVDM…TLKKTGKTVS (63 aa)) constitute an HMA domain. Residues Cys-12 and Cys-15 each coordinate Cu cation. At Ser-47 the chain carries Phosphoserine. The residue at position 60 (Lys-60) is an N6-acetyllysine.

This sequence belongs to the ATX1 family. In terms of assembly, homodimer. Interacts with ATP7B. Interacts with ATP7A. Interacts (via dimer form) with SLC31A1 (via C-terminal domain); this interaction improves ATOX1 stability and controls intracellular Cu(I) levels. As to expression, ubiquitous.

In terms of biological role, binds and deliver cytosolic copper to the copper ATPase proteins. May be important in cellular antioxidant defense. This chain is Copper transport protein ATOX1, found in Homo sapiens (Human).